Consider the following 198-residue polypeptide: MHYPEPISKLIDSFMKLPGIGPKTAQRLAFHTLDMKEDDVVQFAKALVDVKRELTYCSVCGHITENDPCYICEDKQRDRSVICVVEDDKDVIAMEKMREYKGLYHVLHGSISPMDGIGPEDINIPSLIERLKSDEVSELILAMNPNLEGESTAMYISRLVKPIGIKVTRLAQGLSVGGDLEYADEVTLSKAITGRTEM.

The C4-type zinc finger occupies 57-72 (CSVCGHITENDPCYIC). A Toprim domain is found at 80-175 (SVICVVEDDK…KVTRLAQGLS (96 aa)).

The protein belongs to the RecR family.

May play a role in DNA repair. It seems to be involved in an RecBC-independent recombinational process of DNA repair. It may act with RecF and RecO. This chain is Recombination protein RecR, found in Staphylococcus aureus (strain Mu3 / ATCC 700698).